The following is a 196-amino-acid chain: MTKRTASIKRQTTETTISLSLNLDGTGQADMCTGVRLFDHMLSQLAKHGLFDINISANGDDIHHLVEDVALTLGKAFNEALGERKGIVRMADATVPMDDSLASVALDLSGRGYAVMDLSFAKNDLTGFPTDLVRHFLETFAIEGRLNLHARILYGSNDHHKAEALFKALARALDKATSIDPRREGVAPSTKGMLEN.

It belongs to the imidazoleglycerol-phosphate dehydratase family.

It localises to the cytoplasm. The enzyme catalyses D-erythro-1-(imidazol-4-yl)glycerol 3-phosphate = 3-(imidazol-4-yl)-2-oxopropyl phosphate + H2O. The protein operates within amino-acid biosynthesis; L-histidine biosynthesis; L-histidine from 5-phospho-alpha-D-ribose 1-diphosphate: step 6/9. This is Imidazoleglycerol-phosphate dehydratase from Dehalococcoides mccartyi (strain CBDB1).